The sequence spans 65 residues: MAAFVESARAGAGADEVIQLVSDGVNEYSEKMMEGVVACPRILMPCKVNDDCLRGCKCLSNGYCG.

Cystine bridges form between Cys-39/Cys-56, Cys-46/Cys-58, and Cys-52/Cys-64.

The protein belongs to the protease inhibitor I7 (squash-type serine protease inhibitor) family.

The protein resides in the secreted. Functionally, inhibits trypsin. The protein is Trypsin inhibitor 1 of Trichosanthes kirilowii (Chinese snake gourd).